The sequence spans 106 residues: Large ribosomal subunit protein eL42 (106 aa).

Positions 36–56 are disordered; the sequence is FAQGKRRYDRKQSGYGGQTKP.

It belongs to the eukaryotic ribosomal protein eL42 family.

This is Large ribosomal subunit protein eL42 (RPL44) from Phaffia rhodozyma (Yeast).